The primary structure comprises 512 residues: Neuronal acetylcholine receptor subunit alpha-3 (512 aa).

An N-terminal signal peptide occupies residues 1 to 23 (MNSASRITLFFLLTVLITQECLS). The Extracellular segment spans residues 24-242 (SKGEDRLFRR…PLFYTINLII (219 aa)). 2 N-linked (GlcNAc...) asparagine glycosylation sites follow: Asn47 and Asn164. 2 cysteine pairs are disulfide-bonded: Cys151-Cys165 and Cys215-Cys216. A helical transmembrane segment spans residues 243–258 (PCLLISFLTILVFYLP). Over 259-260 (SD) the chain is Cytoplasmic. Residues 261 to 277 (CGEKVTLCISVLLSLTV) form a helical membrane-spanning segment. Glu263 lines the Na(+) pocket. Residues 278 to 299 (FLLVITETIPSTSLVIPLIGEY) lie on the Extracellular side of the membrane. A helical transmembrane segment spans residues 300–318 (LLFTMIFVTLSIVITVFVL). Over 319 to 482 (NVHYRTPMTH…EDDWKYVAMV (164 aa)) the chain is Cytoplasmic. A disordered region spans residues 356–389 (ESSGKGGGEIAGSSGTGGGRGAEGKKMKSSASQQ). Positions 359-376 (GKGGGEIAGSSGTGGGRG) are enriched in gly residues. A helical membrane pass occupies residues 483 to 501 (IDRIFLWVFVLVCVLGTLG). Over 502–512 (LFLQPLIGFFS) the chain is Extracellular.

Belongs to the ligand-gated ion channel (TC 1.A.9) family. Acetylcholine receptor (TC 1.A.9.1) subfamily. Alpha-3/CHRNA3 sub-subfamily. In terms of assembly, neuronal AChR is composed of two different types of subunits: alpha and beta. CHRNA3/Alpha-3 subunit can be combined to CHRNB2/beta-2 or CHRNB4/beta-4 to give rise to functional receptors. As to expression, expressed in retina and brain.

It is found in the synaptic cell membrane. The protein localises to the cell membrane. The protein resides in the endoplasmic reticulum. It localises to the golgi apparatus. The enzyme catalyses K(+)(in) = K(+)(out). It catalyses the reaction Na(+)(in) = Na(+)(out). The catalysed reaction is Ca(2+)(in) = Ca(2+)(out). Activated by a myriad of ligands such as acetylcholine, cytisine, nicotine, choline and epibatidine. The heteropentamer CHRNA3:CHRNB2 activity is blocked by alpha-conotoxins ImI, ImII, PnIA, GID and MII. The heteropentamer CHRNA3:CHRNB4 activity is blocked by the alpha-conotoxin ImI and AuIB. In terms of biological role, component of neuronal acetylcholine receptors (nAChRs) that function as pentameric, ligand-gated cation channels with high calcium permeability among other activities. nAChRs are excitatory neurotrasnmitter receptors formed by a collection of nAChR subunits known to mediate synaptic transmission in the nervous system and the neuromuscular junction. Each nAchR subunit confers differential attributes to channel properties, including activation, deactivation and desensitization kinetics, pH sensitivity, cation permeability, and binding to allosteric modulators. CHRNA3 forms heteropentameric neuronal acetylcholine receptors with CHRNB2 and CHRNB4. CHRNA3:CHRNB4 being predominant in neurons of the autonomic ganglia, it is known as ganglionic nicotinic receptor. CHRNA3:CHRNB4 also plays an important role in the habenulo-interpeduncular tract, modulating the mesolimbic dopamine system and affecting reward circuits and addiction. Hypothalamic CHRNA3:CHRNB4 nAChR activation by nicotine leads to activation of POMC neurons and a decrease in food intake. Also expressed in the urothelium where it modulates reflex bladder activity by increasing intracellular calcium through extracellular influx and basal ATP release. The protein is Neuronal acetylcholine receptor subunit alpha-3 (chrna3) of Carassius auratus (Goldfish).